Here is a 426-residue protein sequence, read N- to C-terminus: Gamma-glutamyl phosphate reductase (426 aa).

Belongs to the gamma-glutamyl phosphate reductase family.

Its subcellular location is the cytoplasm. The enzyme catalyses L-glutamate 5-semialdehyde + phosphate + NADP(+) = L-glutamyl 5-phosphate + NADPH + H(+). It functions in the pathway amino-acid biosynthesis; L-proline biosynthesis; L-glutamate 5-semialdehyde from L-glutamate: step 2/2. In terms of biological role, catalyzes the NADPH-dependent reduction of L-glutamate 5-phosphate into L-glutamate 5-semialdehyde and phosphate. The product spontaneously undergoes cyclization to form 1-pyrroline-5-carboxylate. In Deinococcus geothermalis (strain DSM 11300 / CIP 105573 / AG-3a), this protein is Gamma-glutamyl phosphate reductase.